Consider the following 353-residue polypeptide: DNA-directed RNA polymerase subunit alpha (353 aa).

Residues 1 to 234 (MVREKVTVST…DLFIPFLHTE (234 aa)) are alpha N-terminal domain (alpha-NTD). Residues 267-353 (KRALKSIFID…LAQLIDSKSG (87 aa)) are alpha C-terminal domain (alpha-CTD).

It belongs to the RNA polymerase alpha chain family. In terms of assembly, in plastids the minimal PEP RNA polymerase catalytic core is composed of four subunits: alpha, beta, beta', and beta''. When a (nuclear-encoded) sigma factor is associated with the core the holoenzyme is formed, which can initiate transcription.

It is found in the plastid. Its subcellular location is the chloroplast. It catalyses the reaction RNA(n) + a ribonucleoside 5'-triphosphate = RNA(n+1) + diphosphate. DNA-dependent RNA polymerase catalyzes the transcription of DNA into RNA using the four ribonucleoside triphosphates as substrates. In Daucus carota (Wild carrot), this protein is DNA-directed RNA polymerase subunit alpha.